The following is a 166-amino-acid chain: Cofilin-1 (166 aa).

An N-acetylalanine modification is found at Ala-2. Ser-3 and Ser-8 each carry phosphoserine. Positions 4 to 153 (GVAVSDGVIK…KDRCTLAEKL (150 aa)) constitute an ADF-H domain. Lys-13 is subject to N6-acetyllysine. A Phosphothreonine modification is found at Thr-25. The short motif at 30-34 (KKRKK) is the Nuclear localization signal element. Ser-41 carries the phosphoserine modification. Residue Thr-63 is modified to Phosphothreonine. A Phosphotyrosine modification is found at Tyr-68. An N6-acetyllysine modification is found at Lys-73. A Phosphotyrosine modification is found at Tyr-82. Lys-132 is covalently cross-linked (Glycyl lysine isopeptide (Lys-Gly) (interchain with G-Cter in SUMO2)). Residue Tyr-140 is modified to Phosphotyrosine. At Lys-144 the chain carries N6-acetyllysine. Ser-156 carries the phosphoserine modification.

This sequence belongs to the actin-binding proteins ADF family. As to quaternary structure, can bind G- and F-actin in a 1:1 ratio of cofilin to actin. It is a major component of intranuclear and cytoplasmic actin rods. Interacts with the subcortical maternal complex (SCMC) via interaction with TLE6 and NLRP5. Interacts with C9orf72. Post-translationally, inactivated by phosphorylation on Ser-3. Phosphorylated on Ser-3 in resting cells. Dephosphorylated by PDXP/chronophin; this restores its activity in promoting actin filament depolymerization. The phosphorylation of Ser-24 may prevent recognition of the nuclear localization signal. Phosphorylated via a ARRB1-RAC1-LIMK1-PAK1 cascade upon active ligand stimulation of atypical chemokine receptor ACKR2. Widely distributed in various tissues. Not found in skeletal muscle.

The protein localises to the nucleus matrix. It localises to the cytoplasm. It is found in the cytoskeleton. Its subcellular location is the cell projection. The protein resides in the ruffle membrane. The protein localises to the lamellipodium membrane. It localises to the lamellipodium. It is found in the growth cone. Its subcellular location is the axon. Binds to F-actin and exhibits pH-sensitive F-actin depolymerizing activity. In conjunction with the subcortical maternal complex (SCMC), plays an essential role for zygotes to progress beyond the first embryonic cell divisions via regulation of actin dynamics. Required for the centralization of the mitotic spindle and symmetric division of zygotes. Plays a role in the regulation of cell morphology and cytoskeletal organization in epithelial cells. Required for the up-regulation of atypical chemokine receptor ACKR2 from endosomal compartment to cell membrane, increasing its efficiency in chemokine uptake and degradation. Required for neural tube morphogenesis and neural crest cell migration. The sequence is that of Cofilin-1 (Cfl1) from Mus musculus (Mouse).